A 168-amino-acid chain; its full sequence is Disulfide bond formation protein B (168 aa).

The Cytoplasmic portion of the chain corresponds to 1-13 (MFLTYFDAMPRRV). Residues 14–30 (LALVSLACVALLAFGLY) form a helical membrane-spanning segment. Over 31–48 (LQHVVGLEPCPMCIVQRY) the chain is Periplasmic. Residues C40 and C43 are joined by a disulfide bond. The helical transmembrane segment at 49-64 (ALVLVAVVAGITAVAK) threads the bilayer. Residues 65-70 (SRGLLI) are Cytoplasmic-facing. The chain crosses the membrane as a helical span at residues 71–88 (TGSGLLVLLSGFGAFVAA). At 89–144 (RQSFLQWYPPEVASCGRDFYGMIETFPLKRAIPMIFKGSGDCTKIDWTFLGLSIAN) the chain is on the periplasmic side. C103 and C130 form a disulfide bridge. A helical transmembrane segment spans residues 145-163 (WSFLCFVAIALVGLVLITR). The Cytoplasmic segment spans residues 164 to 168 (LARQR).

The protein belongs to the DsbB family.

It localises to the cell inner membrane. Required for disulfide bond formation in some periplasmic proteins. Acts by oxidizing the DsbA protein. This chain is Disulfide bond formation protein B, found in Polaromonas sp. (strain JS666 / ATCC BAA-500).